The sequence spans 199 residues: Superoxide dismutase [Mn/Fe] (199 aa).

Residues His27, His81, Asp161, and His165 each contribute to the Fe(3+) site. Residues His27, His81, Asp161, and His165 each contribute to the Mn(2+) site.

It belongs to the iron/manganese superoxide dismutase family. Homodimer. The cofactor is Mn(2+). Fe(3+) serves as cofactor.

It carries out the reaction 2 superoxide + 2 H(+) = H2O2 + O2. Its function is as follows. Destroys superoxide anion radicals which are normally produced within the cells and which are toxic to biological systems. Catalyzes the dismutation of superoxide anion radicals into O2 and H2O2 by successive reduction and oxidation of the transition metal ion at the active site. In Staphylococcus epidermidis (strain ATCC 35984 / DSM 28319 / BCRC 17069 / CCUG 31568 / BM 3577 / RP62A), this protein is Superoxide dismutase [Mn/Fe] (sodA).